We begin with the raw amino-acid sequence, 147 residues long: Hemoglobin subunit epsilon-2 (147 aa).

The 145-residue stretch at 3–147 (HFTTEENVAV…VANALTHKYH (145 aa)) folds into the Globin domain. Residues Tyr64 and His93 each contribute to the heme b site.

The protein belongs to the globin family. In terms of tissue distribution, red blood cells.

Functionally, hemoglobin epsilon chain is a beta-type chain found in early embryos. This Bos taurus (Bovine) protein is Hemoglobin subunit epsilon-2 (HBE2).